The sequence spans 116 residues: Large ribosomal subunit protein bL19 (116 aa).

The protein belongs to the bacterial ribosomal protein bL19 family.

Functionally, this protein is located at the 30S-50S ribosomal subunit interface and may play a role in the structure and function of the aminoacyl-tRNA binding site. This is Large ribosomal subunit protein bL19 from Clostridioides difficile (strain 630) (Peptoclostridium difficile).